We begin with the raw amino-acid sequence, 220 residues long: Ktr system potassium uptake protein A (220 aa).

In terms of domain architecture, RCK N-terminal spans Asp-5–Ile-121. Residues Arg-15, Asp-35 to Asn-37, Asn-55 to Cys-56, Ile-77 to Ala-79, Lys-102 to Asn-104, and Glu-124 each bind ATP. Residues Lys-138–Leu-220 form the RCK C-terminal domain.

This sequence belongs to the KtrA potassium transport family. In terms of assembly, the uptake system is composed of KtrA and KtrB.

The protein localises to the cell inner membrane. With respect to regulation, requires both ATP and a high membrane potential for activity. Binding of ATP causes a conformational change in KtrA, which promotes formation of the KtrAB complex. Can also bind, with lower affinity, other nucleotides such as NADH or NAD(+), but only ATP can induce a conformational change. Functionally, part of the Na(+)-dependent high affinity K(+) uptake system KtrAB. KtrA is the regulatory subunit and plays an important role in the substrate specificity and transport mechanism of the system. Binds ATP but lacks ATPase activity. The sequence is that of Ktr system potassium uptake protein A (ktrA) from Vibrio alginolyticus.